We begin with the raw amino-acid sequence, 209 residues long: GTP-binding nuclear protein Ran1B (209 aa).

The region spanning 1–162 is the Small GTPase Ran-type domain; sequence NFKLVIVGDG…LYLARKLAGD (162 aa). 9 to 16 is a binding site for GTP; the sequence is DGGTGKTT. Positions 28–36 are switch-I; it reads KKYEPTIGV. Residues G59, 113-116, and 141-143 contribute to the GTP site; these read NKVD and SAK. The segment at 59–75 is switch-II; sequence GQEKFGGLRDGYYIHGQ. Over residues 187–200 the composition is skewed to low complexity; it reads QHEAELAAAASQPL. The segment at 187–209 is disordered; the sequence is QHEAELAAAASQPLPDDDDDAFD.

This sequence belongs to the small GTPase superfamily. Ran family. As to quaternary structure, found in a nuclear export complex with RanGTP, exportin and pre-miRNA.

The protein localises to the nucleus. Its function is as follows. GTP-binding protein involved in nucleocytoplasmic transport. Required for the import of protein into the nucleus and also for RNA export. Involved in chromatin condensation and control of cell cycle. This chain is GTP-binding nuclear protein Ran1B (RAN1B), found in Lotus japonicus (Lotus corniculatus var. japonicus).